An 82-amino-acid chain; its full sequence is Cytotoxin homolog Clbp-3 (82 aa).

Residues 1 to 21 (MKTLLLTLVVVTIVCLDLGYT) form the signal peptide. Disulfide bonds link cysteine 24/cysteine 43, cysteine 36/cysteine 60, cysteine 64/cysteine 75, and cysteine 76/cysteine 81.

It belongs to the three-finger toxin family. Short-chain subfamily. Orphan group XV sub-subfamily. In terms of tissue distribution, expressed by the venom gland.

It localises to the secreted. Its subcellular location is the target cell membrane. In terms of biological role, has low cytotoxic activity. This chain is Cytotoxin homolog Clbp-3, found in Naja atra (Chinese cobra).